The sequence spans 334 residues: Ferredoxin--NADP reductase (334 aa).

D32, Q40, Y45, V85, F120, D287, and T327 together coordinate FAD.

It belongs to the ferredoxin--NADP reductase type 2 family. In terms of assembly, homodimer. It depends on FAD as a cofactor.

The enzyme catalyses 2 reduced [2Fe-2S]-[ferredoxin] + NADP(+) + H(+) = 2 oxidized [2Fe-2S]-[ferredoxin] + NADPH. This chain is Ferredoxin--NADP reductase, found in Wolbachia pipientis subsp. Culex pipiens (strain wPip).